The sequence spans 436 residues: Phosphomethylpyrimidine synthase (436 aa).

Residues Asn-69, Met-98, Tyr-127, His-163, 185 to 187 (SRG), 226 to 229 (DACR), and Glu-265 contribute to the substrate site. His-269 is a Zn(2+) binding site. Tyr-292 lines the substrate pocket. Position 333 (His-333) interacts with Zn(2+). Residues Cys-409, Cys-412, and Cys-416 each coordinate [4Fe-4S] cluster.

It belongs to the ThiC family. [4Fe-4S] cluster is required as a cofactor.

It carries out the reaction 5-amino-1-(5-phospho-beta-D-ribosyl)imidazole + S-adenosyl-L-methionine = 4-amino-2-methyl-5-(phosphooxymethyl)pyrimidine + CO + 5'-deoxyadenosine + formate + L-methionine + 3 H(+). Its pathway is cofactor biosynthesis; thiamine diphosphate biosynthesis. Catalyzes the synthesis of the hydroxymethylpyrimidine phosphate (HMP-P) moiety of thiamine from aminoimidazole ribotide (AIR) in a radical S-adenosyl-L-methionine (SAM)-dependent reaction. The sequence is that of Phosphomethylpyrimidine synthase from Clostridium perfringens (strain SM101 / Type A).